Here is a 367-residue protein sequence, read N- to C-terminus: Dihydroorotate dehydrogenase (quinone) (367 aa).

FMN is bound by residues 61 to 65 (AGFDK) and Thr-85. Residue Lys-65 coordinates substrate. 110–114 (NRMGF) contributes to the substrate binding site. Residues Asn-138 and Asn-169 each coordinate FMN. Asn-169 is a binding site for substrate. Ser-172 acts as the Nucleophile in catalysis. Asn-174 contacts substrate. Lys-212 and Thr-240 together coordinate FMN. A substrate-binding site is contributed by 241-242 (NT). FMN is bound by residues Gly-263, Gly-292, and 313–314 (YS).

This sequence belongs to the dihydroorotate dehydrogenase family. Type 2 subfamily. As to quaternary structure, monomer. The cofactor is FMN.

It localises to the cell membrane. The catalysed reaction is (S)-dihydroorotate + a quinone = orotate + a quinol. It participates in pyrimidine metabolism; UMP biosynthesis via de novo pathway; orotate from (S)-dihydroorotate (quinone route): step 1/1. Catalyzes the conversion of dihydroorotate to orotate with quinone as electron acceptor. The protein is Dihydroorotate dehydrogenase (quinone) of Rhodospirillum rubrum (strain ATCC 11170 / ATH 1.1.1 / DSM 467 / LMG 4362 / NCIMB 8255 / S1).